A 297-amino-acid chain; its full sequence is Palmitoyl-protein thioesterase ABHD10, mitochondrial (297 aa).

A mitochondrion-targeting transit peptide spans 1–43 (MAAWVPCRKWGWAAVSFGRHRGLIASLARKPPWAWWLSACRQK). An AB hydrolase-1 domain is found at 69-181 (IIFIPGYLSN…GVVTQFHSLP (113 aa)). Active-site charge relay system residues include serine 143, aspartate 240, and histidine 270.

It belongs to the AB hydrolase superfamily. As to expression, expressed in epididymal sperm but not in testicular sperm (at protein level).

It is found in the mitochondrion. It carries out the reaction S-hexadecanoyl-L-cysteinyl-[protein] + H2O = L-cysteinyl-[protein] + hexadecanoate + H(+). The enzyme catalyses mycophenolic acid O-acyl-beta-D-glucuronide + H2O = mycophenolate + D-glucuronate + H(+). With respect to regulation, inhibited by palmostatin-B. Its function is as follows. Acts as an acyl-protein thioesterase that hydrolyzes fatty acids from acylated residues in proteins. Regulates the mitochondrial S-depalmitoylation of the nucleophilic active site residue of peroxiredoxin-5/PRDX5, a key antioxidant protein, therefore modulating mitochondrial antioxidant ability. Also catalyzes the deglucuronidation of mycophenolic acid acyl-glucuronide, an active metabolite of the immunosuppressant drug mycophenolate. The chain is Palmitoyl-protein thioesterase ABHD10, mitochondrial from Rattus norvegicus (Rat).